Consider the following 186-residue polypeptide: MASILRSPQALQLTLALIKPDAVAHPLILEAVHQQILSNKFLIVRMRELLWRKEDCQRFYREHEGRFFYQRLVEFMASGPIRAYILAHKDAIQLWRTLMGPTRVFRARHVAPDSIRGSFGLTDTRNTTHGSDSVVSASREIAAFFPDFSEQRWYEEEEPQLRCGPVCYSPEGGVHYVAGTGGLGPA.

Positions 19, 68, 96, 102, 116, and 126 each coordinate ATP. The Pros-phosphohistidine intermediate role is filled by H129.

Belongs to the NDK family. Mg(2+) is required as a cofactor. In terms of tissue distribution, expressed at a moderately low level in many tissues. Most abundant in kidney, prostate, ovary, intestine, and spleen.

The catalysed reaction is a 2'-deoxyribonucleoside 5'-diphosphate + ATP = a 2'-deoxyribonucleoside 5'-triphosphate + ADP. It catalyses the reaction a ribonucleoside 5'-diphosphate + ATP = a ribonucleoside 5'-triphosphate + ADP. Major role in the synthesis of nucleoside triphosphates other than ATP. The ATP gamma phosphate is transferred to the NDP beta phosphate via a ping-pong mechanism, using a phosphorylated active-site intermediate. Inhibitor of p53-induced apoptosis. The chain is Nucleoside diphosphate kinase 6 (NME6) from Homo sapiens (Human).